We begin with the raw amino-acid sequence, 158 residues long: 6,7-dimethyl-8-ribityllumazine synthase (158 aa).

5-amino-6-(D-ribitylamino)uracil contacts are provided by residues Phe23, 61 to 63 (SFE), and 85 to 87 (AVI). 90–91 (ET) contacts (2S)-2-hydroxy-3-oxobutyl phosphate. The Proton donor role is filled by His93. Phe118 provides a ligand contact to 5-amino-6-(D-ribitylamino)uracil. Residue Arg132 coordinates (2S)-2-hydroxy-3-oxobutyl phosphate.

It belongs to the DMRL synthase family.

It catalyses the reaction (2S)-2-hydroxy-3-oxobutyl phosphate + 5-amino-6-(D-ribitylamino)uracil = 6,7-dimethyl-8-(1-D-ribityl)lumazine + phosphate + 2 H2O + H(+). It functions in the pathway cofactor biosynthesis; riboflavin biosynthesis; riboflavin from 2-hydroxy-3-oxobutyl phosphate and 5-amino-6-(D-ribitylamino)uracil: step 1/2. Catalyzes the formation of 6,7-dimethyl-8-ribityllumazine by condensation of 5-amino-6-(D-ribitylamino)uracil with 3,4-dihydroxy-2-butanone 4-phosphate. This is the penultimate step in the biosynthesis of riboflavin. The polypeptide is 6,7-dimethyl-8-ribityllumazine synthase (Prochlorococcus marinus (strain MIT 9515)).